Consider the following 180-residue polypeptide: UPF0134 protein MPN_127 (180 aa).

It belongs to the UPF0134 family.

The protein is UPF0134 protein MPN_127 of Mycoplasma pneumoniae (strain ATCC 29342 / M129 / Subtype 1) (Mycoplasmoides pneumoniae).